The primary structure comprises 297 residues: HTH-type transcriptional regulator ArgP (297 aa).

One can recognise an HTH lysR-type domain in the interval 4–60; sequence PDYRTLQALDAVIRERGFERAAQKLCITQSAVSQRIKQLENMFGQPLLVRTVPPRPT. The segment at residues 21–40 is a DNA-binding region (H-T-H motif); it reads FERAAQKLCITQSAVSQRIK.

It belongs to the LysR transcriptional regulatory family. As to quaternary structure, homodimer.

In terms of biological role, controls the transcription of genes involved in arginine and lysine metabolism. The protein is HTH-type transcriptional regulator ArgP of Salmonella arizonae (strain ATCC BAA-731 / CDC346-86 / RSK2980).